Reading from the N-terminus, the 159-residue chain is Large ribosomal subunit protein uL30 (159 aa).

This sequence belongs to the universal ribosomal protein uL30 family. Part of the 50S ribosomal subunit.

The chain is Large ribosomal subunit protein uL30 from Ignicoccus hospitalis (strain KIN4/I / DSM 18386 / JCM 14125).